The chain runs to 210 residues: Signal peptidase complex catalytic subunit SEC11 (210 aa).

At 1 to 14 the chain is on the cytoplasmic side; that stretch reads MLSSLSPHLSNVRQ. The chain crosses the membrane as a helical; Signal-anchor for type II membrane protein span at residues 15-31; it reads TLTQVLNFALVLSTAFM. The Lumenal portion of the chain corresponds to 32–210; sequence MWKALSIYTN…MGVMVILQRE (179 aa). Residue asparagine 41 is glycosylated (N-linked (GlcNAc...) asparagine). Catalysis depends on charge relay system residues serine 53 and histidine 92. Over residues 101–110 the composition is skewed to basic and acidic residues; that stretch reads DARDPKEGGG. Positions 101-124 are disordered; sequence DARDPKEGGGKKGKSASGTGKKES. Aspartate 152 (charge relay system) is an active-site residue. The tract at residues 196–207 is C-terminal short (CTS) helix; the sequence is VLLGLMGVMVIL.

It belongs to the peptidase S26B family. Component of the signal peptidase complex (SPC) composed of a catalytic subunit SEC11 and three accessory subunits SPC1, SPC2 and SPC3. The complex induces a local thinning of the ER membrane which is used to measure the length of the signal peptide (SP) h-region of protein substrates. This ensures the selectivity of the complex towards h-regions shorter than 18-20 amino acids. SPC associates with the translocon complex.

The protein resides in the endoplasmic reticulum membrane. It carries out the reaction Cleavage of hydrophobic, N-terminal signal or leader sequences from secreted and periplasmic proteins.. Its function is as follows. Catalytic component of the signal peptidase complex (SPC) which catalyzes the cleavage of N-terminal signal sequences from nascent proteins as they are translocated into the lumen of the endoplasmic reticulum. Specifically cleaves N-terminal signal peptides that contain a hydrophobic alpha-helix (h-region) shorter than 18-20 amino acids. The chain is Signal peptidase complex catalytic subunit SEC11 (SEC11) from Uncinocarpus reesii (strain UAMH 1704).